Consider the following 326-residue polypeptide: Ribonuclease Z (326 aa).

Residues H62, H64, D66, H67, H140, D211, and H269 each contribute to the Zn(2+) site. The active-site Proton acceptor is D66.

Belongs to the RNase Z family. In terms of assembly, homodimer. Zn(2+) is required as a cofactor.

It catalyses the reaction Endonucleolytic cleavage of RNA, removing extra 3' nucleotides from tRNA precursor, generating 3' termini of tRNAs. A 3'-hydroxy group is left at the tRNA terminus and a 5'-phosphoryl group is left at the trailer molecule.. In terms of biological role, zinc phosphodiesterase, which displays some tRNA 3'-processing endonuclease activity. Probably involved in tRNA maturation, by removing a 3'-trailer from precursor tRNA. This is Ribonuclease Z from Synechocystis sp. (strain ATCC 27184 / PCC 6803 / Kazusa).